The following is a 254-amino-acid chain: Pyrroloquinoline-quinone synthase (254 aa).

The protein belongs to the PqqC family.

It catalyses the reaction 6-(2-amino-2-carboxyethyl)-7,8-dioxo-1,2,3,4,7,8-hexahydroquinoline-2,4-dicarboxylate + 3 O2 = pyrroloquinoline quinone + 2 H2O2 + 2 H2O + H(+). It participates in cofactor biosynthesis; pyrroloquinoline quinone biosynthesis. Functionally, ring cyclization and eight-electron oxidation of 3a-(2-amino-2-carboxyethyl)-4,5-dioxo-4,5,6,7,8,9-hexahydroquinoline-7,9-dicarboxylic-acid to PQQ. In Rhodopseudomonas palustris (strain ATCC BAA-98 / CGA009), this protein is Pyrroloquinoline-quinone synthase.